Reading from the N-terminus, the 269-residue chain is UPF0494 membrane protein C1348.01 (269 aa).

The next 4 helical transmembrane spans lie at 107–127, 144–164, 177–197, and 201–221; these read WPLL…KFEV, IWVP…SLIF, GVII…IAAL, and ITGL…LSLG.

It belongs to the UPF0494 family.

It localises to the vacuole membrane. The polypeptide is UPF0494 membrane protein C1348.01 (Schizosaccharomyces pombe (strain 972 / ATCC 24843) (Fission yeast)).